A 362-amino-acid polypeptide reads, in one-letter code: Ferrochelatase (362 aa).

Positions 212 and 294 each coordinate Fe cation.

The protein belongs to the ferrochelatase family.

Its subcellular location is the cytoplasm. The catalysed reaction is heme b + 2 H(+) = protoporphyrin IX + Fe(2+). Its pathway is porphyrin-containing compound metabolism; protoheme biosynthesis; protoheme from protoporphyrin-IX: step 1/1. In terms of biological role, catalyzes the ferrous insertion into protoporphyrin IX. The polypeptide is Ferrochelatase (Leptospira biflexa).